Consider the following 245-residue polypeptide: Venom nerve growth factor 1 (245 aa).

Residues 1–18 (MSMLCYTLIIAFLIGIWA) form the signal peptide. Positions 19-125 (APKSEDNVPL…ALNRNIRAKR (107 aa)) are excised as a propeptide. Residues 47 to 66 (GLKTSRNTDQRHPAPKKAED) show a composition bias toward basic and acidic residues. A disordered region spans residues 47 to 69 (GLKTSRNTDQRHPAPKKAEDQEL). Disulfide bonds link cysteine 139-cysteine 206, cysteine 182-cysteine 234, and cysteine 194-cysteine 236. 2 N-linked (GlcNAc...) asparagine glycosylation sites follow: asparagine 148 and asparagine 151.

This sequence belongs to the NGF-beta family. As to quaternary structure, homodimer; non-covalently linked. Expressed by the venom gland.

Its subcellular location is the secreted. Its function is as follows. Nerve growth factor is important for the development and maintenance of the sympathetic and sensory nervous systems. It stimulates division and differentiation of sympathetic and embryonic sensory neurons as well as basal forebrain cholinergic neurons in the brain. Its relevance in the snake venom is not clear. However, it has been shown to inhibit metalloproteinase-dependent proteolysis of platelet glycoprotein Ib alpha, suggesting a metalloproteinase inhibition to prevent metalloprotease autodigestion and/or protection against prey proteases. Binds a lipid between the two protein chains in the homodimer. The lipid-bound form promotes histamine relase from mouse mast cells, contrary to the lipid-free form. The protein is Venom nerve growth factor 1 of Tropidechis carinatus (Australian rough-scaled snake).